The chain runs to 278 residues: Diaminopimelate epimerase (278 aa).

Asn13, Gln49, and Asn68 together coordinate substrate. Catalysis depends on Cys77, which acts as the Proton donor. Substrate contacts are provided by residues 78-79 (GN), Asn161, Asn194, and 212-213 (ER). The active-site Proton acceptor is Cys221. Residue 222–223 (GT) participates in substrate binding.

It belongs to the diaminopimelate epimerase family. In terms of assembly, homodimer.

It is found in the cytoplasm. The catalysed reaction is (2S,6S)-2,6-diaminopimelate = meso-2,6-diaminopimelate. The protein operates within amino-acid biosynthesis; L-lysine biosynthesis via DAP pathway; DL-2,6-diaminopimelate from LL-2,6-diaminopimelate: step 1/1. Its function is as follows. Catalyzes the stereoinversion of LL-2,6-diaminopimelate (L,L-DAP) to meso-diaminopimelate (meso-DAP), a precursor of L-lysine and an essential component of the bacterial peptidoglycan. The chain is Diaminopimelate epimerase from Nitrosomonas eutropha (strain DSM 101675 / C91 / Nm57).